A 67-amino-acid polypeptide reads, in one-letter code: UPF0434 protein Tcr_0959 (67 aa).

It belongs to the UPF0434 family.

This is UPF0434 protein Tcr_0959 from Hydrogenovibrio crunogenus (strain DSM 25203 / XCL-2) (Thiomicrospira crunogena).